We begin with the raw amino-acid sequence, 650 residues long: Putative secretin GspD (650 aa).

A signal peptide spans 1-23 (MKGLNKITCCLLAALLMPCAGHA). Positions 24–122 (ENEQYGANFN…IADSSRPGVG (99 aa)) are N0. Residues 124–188 (ELVTRIVPLE…EVIKRVDVIG (65 aa)) are N1. The segment at 189–263 (TEKQQIIHLE…LLKSLDVEES (75 aa)) is N2. An N3 region spans residues 266–342 (GNTRVYYLKY…KLATVIARLD (77 aa)). The secretin stretch occupies residues 345 to 596 (RAQVLVEAII…VFIRPTIIRD (252 aa)). The interval 598–650 (DVYRSLSKEKYTRYRQEQQQRIDGKSKALVGSEDLPVLDENTFNSHAPAPSSR) is s domain.

It belongs to the bacterial secretin family. GSP D subfamily. Forms a cylindrical channel with 15 subunits; approximately 25% of the particles have 16-subunit channels. Closed pentadeacameric channels are 180 Angstroms long and 145 Angstroms in diameter. Each subunit turns in a clock-wise manner around the channel.

The protein resides in the cell outer membrane. Involved in a type II secretion system (T2SS, formerly general secretion pathway, GSP) for the export of folded proteins across the outer membrane. This subunit would form the outer membrane channel. The protein is Putative secretin GspD (gspD) of Escherichia coli (strain K12).